The sequence spans 459 residues: UDP-N-acetylmuramoylalanine--D-glutamate ligase (459 aa).

131-137 contributes to the ATP binding site; sequence GANGKST.

The protein belongs to the MurCDEF family.

It localises to the cytoplasm. It catalyses the reaction UDP-N-acetyl-alpha-D-muramoyl-L-alanine + D-glutamate + ATP = UDP-N-acetyl-alpha-D-muramoyl-L-alanyl-D-glutamate + ADP + phosphate + H(+). The protein operates within cell wall biogenesis; peptidoglycan biosynthesis. Cell wall formation. Catalyzes the addition of glutamate to the nucleotide precursor UDP-N-acetylmuramoyl-L-alanine (UMA). This Methylococcus capsulatus (strain ATCC 33009 / NCIMB 11132 / Bath) protein is UDP-N-acetylmuramoylalanine--D-glutamate ligase.